A 279-amino-acid polypeptide reads, in one-letter code: Large ribosomal subunit protein uL2 (279 aa).

Residues 223-279 (MAMNPVDHPMGGGEGKSKSGGGRKHPKSPWGQLAKGLKTRNKKKASSKLIVRGRKSK) are disordered. Over residues 232 to 242 (MGGGEGKSKSG) the composition is skewed to gly residues. The segment covering 259-279 (LKTRNKKKASSKLIVRGRKSK) has biased composition (basic residues).

Belongs to the universal ribosomal protein uL2 family. As to quaternary structure, part of the 50S ribosomal subunit. Forms a bridge to the 30S subunit in the 70S ribosome.

One of the primary rRNA binding proteins. Required for association of the 30S and 50S subunits to form the 70S ribosome, for tRNA binding and peptide bond formation. It has been suggested to have peptidyltransferase activity; this is somewhat controversial. Makes several contacts with the 16S rRNA in the 70S ribosome. The protein is Large ribosomal subunit protein uL2 of Prosthecochloris aestuarii (strain DSM 271 / SK 413).